The sequence spans 371 residues: Photosynthetic reaction center cytochrome c subunit (371 aa).

Heme is bound by residues methionine 114, cysteine 127, cysteine 130, histidine 131, methionine 153, histidine 167, cysteine 178, cysteine 181, histidine 182, methionine 267, cysteine 278, cysteine 281, histidine 282, cysteine 339, cysteine 342, and histidine 343.

In terms of assembly, component of the photosynthetic reaction center composed of protein subunits L (PufL), M (PufM), H (PuhA) and cytochrome C (PufC). The reaction center interacts with light-harvesting antenna complex LH1. Binds 4 heme groups per subunit.

It localises to the cellular chromatophore membrane. The reaction center of purple bacteria contains a tightly bound cytochrome molecule which re-reduces the photo oxidized primary electron donor. In Roseobacter denitrificans (strain ATCC 33942 / OCh 114) (Erythrobacter sp. (strain OCh 114)), this protein is Photosynthetic reaction center cytochrome c subunit (pufC).